A 357-amino-acid polypeptide reads, in one-letter code: tRNA N6-adenosine threonylcarbamoyltransferase (357 aa).

Fe cation contacts are provided by His-115 and His-119. Substrate is bound by residues 137-141 (LASGG), Asp-170, Gly-183, and Asn-281. A Fe cation-binding site is contributed by Asp-309.

It belongs to the KAE1 / TsaD family. The cofactor is Fe(2+).

The protein resides in the cytoplasm. It catalyses the reaction L-threonylcarbamoyladenylate + adenosine(37) in tRNA = N(6)-L-threonylcarbamoyladenosine(37) in tRNA + AMP + H(+). In terms of biological role, required for the formation of a threonylcarbamoyl group on adenosine at position 37 (t(6)A37) in tRNAs that read codons beginning with adenine. Is involved in the transfer of the threonylcarbamoyl moiety of threonylcarbamoyl-AMP (TC-AMP) to the N6 group of A37, together with TsaE and TsaB. TsaD likely plays a direct catalytic role in this reaction. The protein is tRNA N6-adenosine threonylcarbamoyltransferase of Bradyrhizobium diazoefficiens (strain JCM 10833 / BCRC 13528 / IAM 13628 / NBRC 14792 / USDA 110).